A 275-amino-acid chain; its full sequence is MMAADRLRERTLSVTTLAADEFHAPSLDDFFPPSVLIHAGPFELDRLMLIRLLMSVLVAAFFVIAMRSPRLVPRGMQNAAELALDFVRINIAEEILGKEQGKRFLPVITTIFFIVVASNMASIIPFLNISPNARIGMPLVLAALAYIVFNYVGIKKYGFFKYVKSSIVVPGVPLPLHFLLVPIEFISTFILRPFTLMVRLMANMLAGHILLVLFFSATNYFFFVSGGFQAIFGVPSIIAGIAFTFFELLVIFLQAYVFALLTAVYIELALHADEH.

7 helical membrane passes run 46-66, 104-124, 135-155, 166-186, 204-224, 231-251, and 252-272; these read RLML…VIAM, FLPV…ASII, IGMP…VGIK, SIVV…IEFI, MLAG…FFFV, IFGV…LLVI, and FLQA…ALHA.

This sequence belongs to the ATPase A chain family. As to quaternary structure, F-type ATPases have 2 components, CF(1) - the catalytic core - and CF(0) - the membrane proton channel. CF(1) has five subunits: alpha(3), beta(3), gamma(1), delta(1), epsilon(1). CF(0) has three main subunits: a(1), b(2) and c(9-12). The alpha and beta chains form an alternating ring which encloses part of the gamma chain. CF(1) is attached to CF(0) by a central stalk formed by the gamma and epsilon chains, while a peripheral stalk is formed by the delta and b chains.

The protein localises to the cell membrane. Its function is as follows. Key component of the proton channel; it plays a direct role in the translocation of protons across the membrane. The sequence is that of ATP synthase subunit a from Rhodococcus erythropolis (strain PR4 / NBRC 100887).